A 129-amino-acid chain; its full sequence is Antimicrobial peptide NK-lysin (129 aa).

The first 6 residues, 1–6 (PGLAFS), serve as a signal peptide directing secretion. The propeptide occupies 7–46 (GLTPEHSALARAHPCDGEQFCQNLAPEDPQGDQLLQREEL). A Saposin B-type domain is found at 46–126 (LGLICESCRK…VDIKICKEKT (81 aa)). 3 disulfides stabilise this stretch: C50–C122, C53–C116, and C81–C91. A propeptide spanning residues 125 to 129 (KTGLI) is cleaved from the precursor.

Cytotoxic T and NK cells.

It is found in the secreted. Functionally, may be an effector molecule of cytotoxic activity. High activity against E.coli and B.megaterium, moderate against A.calcoaceticus and S.pyogenes. No activity against P.aeruginosa, S.aureus and Salmonella. Has some antifungal activity against C.albicans. The sequence is that of Antimicrobial peptide NK-lysin (NKL) from Sus scrofa (Pig).